The primary structure comprises 103 residues: Spherulin-3A (103 aa).

Residues 1–13 (MSVCKGVSGNPAK) form an N-terminal arm region. Beta/gamma crystallin 'Greek key' domains follow at residues 14–55 (GEVF…KVGP) and 57–99 (TKAF…IVAT).

Belongs to the beta/gamma-crystallin family.

The protein localises to the cytoplasm. In terms of biological role, structural protein. The polypeptide is Spherulin-3A (Physarum polycephalum (Slime mold)).